Here is a 258-residue protein sequence, read N- to C-terminus: MVPWEGYVSDETMGTFAPIALYWVYAGGYQLVLHRRPLERYRLHTRAEEEEKNLVALPAVVRGVLLQQLVQAIVAMILFMVTSDSSAVVVQPPIIIQAFQFLVAMLVMDSWQYFVHRYMHQNKFLYRHIHSQHHRLIVPYAIGALYNHPLEGLLLDTVGGAISFLVSGMTPRTSVFFFCFAVLKTVDDHCGLWLPYNIFQSLFQNNTAYHDVHHQLQGSKYNYSQPFFSIWDRILGTHMPYNLVRRKEGGFEARPLRD.

Transmembrane regions (helical) follow at residues 13–33, 63–83, 88–108, 149–169, and 175–195; these read MGTF…QLVL, GVLL…MVTS, VVVQ…MLVM, PLEG…VSGM, and VFFF…LWLP. A Fatty acid hydroxylase domain is found at 101 to 237; sequence FLVAMLVMDS…FSIWDRILGT (137 aa).

This sequence belongs to the sterol desaturase family. Homodimer.

It localises to the endoplasmic reticulum membrane. The catalysed reaction is a long-chain fatty aldehyde + 2 NADPH + O2 + H(+) = a long-chain alkane + formate + 2 NADP(+) + H2O. Functionally, aldehyde decarbonylase involved in the conversion of aldehydes to alkanes. Core component of a very-long-chain alkane synthesis complex. In Oryza sativa subsp. indica (Rice), this protein is Very-long-chain aldehyde decarbonylase GL1-9.